A 202-amino-acid chain; its full sequence is Protein GrpE (202 aa).

Basic and acidic residues predominate over residues 21-37 (EELKNEEVKEETHEHEH). A disordered region spans residues 21 to 52 (EELKNEEVKEETHEHEHKHGGHTCCGKHGHKH). Positions 38-51 (KHGGHTCCGKHGHK) are enriched in basic residues.

This sequence belongs to the GrpE family. As to quaternary structure, homodimer.

It localises to the cytoplasm. Participates actively in the response to hyperosmotic and heat shock by preventing the aggregation of stress-denatured proteins, in association with DnaK and GrpE. It is the nucleotide exchange factor for DnaK and may function as a thermosensor. Unfolded proteins bind initially to DnaJ; upon interaction with the DnaJ-bound protein, DnaK hydrolyzes its bound ATP, resulting in the formation of a stable complex. GrpE releases ADP from DnaK; ATP binding to DnaK triggers the release of the substrate protein, thus completing the reaction cycle. Several rounds of ATP-dependent interactions between DnaJ, DnaK and GrpE are required for fully efficient folding. The chain is Protein GrpE from Fusobacterium nucleatum subsp. polymorphum (Fusobacterium polymorphum).